A 661-amino-acid chain; its full sequence is Pumilio domain-containing protein C56F2.08c (661 aa).

Residues 1 to 74 (MLYVSNLPVG…GPVQVMLAKP (74 aa)) form the RRM domain. Phosphoserine is present on S102. Position 104 is a phosphothreonine (T104). S105 carries the phosphoserine modification. The PUM-HD domain maps to 129–482 (INLDIVDSMI…RLMEEVGMTS (354 aa)). 4 Pumilio repeats span residues 191-226 (SMLD…AMLE), 227-263 (RIAP…LIVK), 264-302 (HLRP…VMAR), and 374-410 (HLAT…LLLK). S482, S486, S488, and S490 each carry phosphoserine.

Its subcellular location is the cytoplasm. The sequence is that of Pumilio domain-containing protein C56F2.08c from Schizosaccharomyces pombe (strain 972 / ATCC 24843) (Fission yeast).